Here is a 448-residue protein sequence, read N- to C-terminus: MTDHNLLPEPKKILWRVSELNRNARVILEQTFPLLWVSGEISNLKRYPSGHWYFSLKDDSAQVRCVMFRHKNLYLDWIPQEGMQVEAQALVTLYEARGEFQLTVEQLRRAGLGALFEAFERLKARLQQEGLFSPEYKQPLPRFPRQIGIITSPNTAALRDVLTTLQLRLPSIPVVIYPAPVQGEGSAAAITTALHTAAVRGECDVLILCRGGGSIEDLWAFNEEIVARAIAACPIPIVTGIGHETDFTIADFVADARAPTPTGAAQLASPDRQAILHRLQYWLHRLQQTMERHIERRMQATDLLAHRLIHPGERIRHQQMHLLQLRGRLQNAWNRQVEIRTWRIEETGRRIHSAKPDIQAGIRHQQELAARLQRAMAHRLENLQFKLRQQQQHLIHLDPKAVLARGYSIAYTARGDILHDSRQTRAGDNVRLVFASGWAKADITETGE.

This sequence belongs to the XseA family. As to quaternary structure, heterooligomer composed of large and small subunits.

It is found in the cytoplasm. It catalyses the reaction Exonucleolytic cleavage in either 5'- to 3'- or 3'- to 5'-direction to yield nucleoside 5'-phosphates.. Its function is as follows. Bidirectionally degrades single-stranded DNA into large acid-insoluble oligonucleotides, which are then degraded further into small acid-soluble oligonucleotides. This chain is Exodeoxyribonuclease 7 large subunit, found in Nitrosomonas europaea (strain ATCC 19718 / CIP 103999 / KCTC 2705 / NBRC 14298).